Consider the following 76-residue polypeptide: MDTFESVKAVVVEQLSVDANEVKPESRFIEDLNADSLDVVELVMALEEKFSIEIPDEEAEKIKTVKDVVAYIEANK.

Residues 1-76 (MDTFESVKAV…DVVAYIEANK (76 aa)) enclose the Carrier domain. Serine 36 carries the post-translational modification O-(pantetheine 4'-phosphoryl)serine.

This sequence belongs to the acyl carrier protein (ACP) family. 4'-phosphopantetheine is transferred from CoA to a specific serine of apo-ACP by AcpS. This modification is essential for activity because fatty acids are bound in thioester linkage to the sulfhydryl of the prosthetic group.

The protein resides in the cytoplasm. It functions in the pathway lipid metabolism; fatty acid biosynthesis. Functionally, carrier of the growing fatty acid chain in fatty acid biosynthesis. The protein is Acyl carrier protein of Helicobacter hepaticus (strain ATCC 51449 / 3B1).